Reading from the N-terminus, the 598-residue chain is F-box/WD repeat-containing protein 8 (598 aa).

N-acetylmethionine is present on Met-1. Residues 20-97 form a disordered region; it reads SQALRRRRRL…PDRDATEPEP (78 aa). Basic and acidic residues predominate over residues 29–44; sequence LEAGERRSPRRPEAGA. Low complexity predominate over residues 51-65; it reads GYLGLAQGLLEGAGR. Over residues 73–93 the composition is skewed to basic and acidic residues; the sequence is RGGDRKDTSSRSRSPPDRDAT. Ser-84 carries the phosphoserine modification. Ser-86 is modified (phosphoserine; by MTOR). In terms of domain architecture, F-box spans 113–159; that stretch reads PFFDVRLPYELAINIFQYLNRRELGLCAQVSKTWKVIAEDEVLWYRL. WD repeat units follow at residues 201–250, 259–299, 300–340, 341–383, 384–429, 430–475, 476–513, and 514–561; these read AVSE…LESE, QPYV…FEHD, ARIQ…SEFE, VQKL…LHYV, YGQP…SKLG, NALG…SAHQ, LGVS…EVHS, and RHPV…AYEF.

In terms of assembly, component of the Cul7-RING(FBXW8) complex consisting of CUL7, RBX1, SKP1 and FBXW8; within the complex interacts with CUL7 and SKP1. Interacts with GLMN isoform 1. Interacts with OBSL1, CUL1, CUL2, CCT6B, PFDN5, CCT2, CCT3, CCT6A, CCT7, VBP1, CCDC8, ARF1, TRIP13, PDCD5 and GORASP1. Interacts with MAP4K1/HPK1 (when autophosphorylated). Associated component of the 3M complex. Interacts with POUF51 (when phosphorylated on 'Ser-347'). Phosphorylation at Ser-86 by mTORC2 promotes FBXW8 stabilization, allowing its translocation to the cytosol in response to insulin. In terms of tissue distribution, widely expressed. Expressed at higher level in skeletal muscle, cartilage and lung.

The protein localises to the cytoplasm. It localises to the perinuclear region. It is found in the golgi apparatus. Its subcellular location is the cytosol. The protein operates within protein modification; protein ubiquitination. In terms of biological role, substrate-recognition component of the Cul7-RING(FBXW8) ubiquitin ligase complex, which mediates the ubiquitination and subsequent proteasomal degradation of target proteins. The Cul7-RING(FBXW8) complex mediates ubiquitination and consequent degradation of GORASP1, acting as a component of the ubiquitin ligase pathway that regulates Golgi morphogenesis and dendrite patterning in brain. Mediates ubiquitination and degradation of IRS1 in a mTOR-dependent manner: the Cul7-RING(FBXW8) complex recognizes and binds IRS1 previously phosphorylated by S6 kinase (RPS6KB1 or RPS6KB2). The Cul7-RING(FBXW8) complex also mediates ubiquitination of MAP4K1/HPK1: recognizes and binds autophosphorylated MAP4K1/HPK1, leading to its degradation, thereby affecting cell proliferation and differentiation. The Cul7-RING(FBXW8) complex also mediates ubiquitination of phosphorylated cyclin-D1 (CCND1). The Cul7-RING(FBXW8) complex is however not a major regulator of CCND1 stability during the G1/S transition. Associated component of the 3M complex, suggesting that it mediates some of 3M complex functions. The polypeptide is F-box/WD repeat-containing protein 8 (Fbxw8) (Mus musculus (Mouse)).